The chain runs to 654 residues: Macrolide export ATP-binding/permease protein MacB (654 aa).

In terms of domain architecture, ABC transporter spans 6–244 (LKVEDLTRRF…EQAAKTPSAS (239 aa)). 42-49 (GASGSGKS) contributes to the ATP binding site. The next 4 helical transmembrane spans lie at 280–300 (FLTM…VALG), 529–549 (LLIS…VMNI), 584–604 (LVCL…GFAF), and 619–639 (SIIW…FLPA).

This sequence belongs to the ABC transporter superfamily. Macrolide exporter (TC 3.A.1.122) family. As to quaternary structure, homodimer. Part of the tripartite efflux system MacAB-TolC, which is composed of an inner membrane transporter, MacB, a periplasmic membrane fusion protein, MacA, and an outer membrane component, TolC. The complex forms a large protein conduit and can translocate molecules across both the inner and outer membranes. Interacts with MacA.

It localises to the cell inner membrane. Its function is as follows. Part of the tripartite efflux system MacAB-TolC. MacB is a non-canonical ABC transporter that contains transmembrane domains (TMD), which form a pore in the inner membrane, and an ATP-binding domain (NBD), which is responsible for energy generation. Confers resistance against macrolides. This is Macrolide export ATP-binding/permease protein MacB from Vibrio parahaemolyticus serotype O3:K6 (strain RIMD 2210633).